Here is a 340-residue protein sequence, read N- to C-terminus: Ketol-acid reductoisomerase (NADP(+)) (340 aa).

A KARI N-terminal Rossmann domain is found at 1-183 (MAVTVYYDKD…GAGRTGIIET (183 aa)). Residues 26 to 29 (FGSQ), K49, S54, and 84 to 87 (DELQ) each bind NADP(+). The active site involves H109. Residue G135 participates in NADP(+) binding. Residues 184–329 (TFKDETETDL…EKLRAMMPWI (146 aa)) enclose the KARI C-terminal knotted domain. 4 residues coordinate Mg(2+): D192, E196, E228, and E232. Residue S253 participates in substrate binding.

This sequence belongs to the ketol-acid reductoisomerase family. Mg(2+) serves as cofactor.

The enzyme catalyses (2R)-2,3-dihydroxy-3-methylbutanoate + NADP(+) = (2S)-2-acetolactate + NADPH + H(+). It catalyses the reaction (2R,3R)-2,3-dihydroxy-3-methylpentanoate + NADP(+) = (S)-2-ethyl-2-hydroxy-3-oxobutanoate + NADPH + H(+). It participates in amino-acid biosynthesis; L-isoleucine biosynthesis; L-isoleucine from 2-oxobutanoate: step 2/4. Its pathway is amino-acid biosynthesis; L-valine biosynthesis; L-valine from pyruvate: step 2/4. Functionally, involved in the biosynthesis of branched-chain amino acids (BCAA). Catalyzes an alkyl-migration followed by a ketol-acid reduction of (S)-2-acetolactate (S2AL) to yield (R)-2,3-dihydroxy-isovalerate. In the isomerase reaction, S2AL is rearranged via a Mg-dependent methyl migration to produce 3-hydroxy-3-methyl-2-ketobutyrate (HMKB). In the reductase reaction, this 2-ketoacid undergoes a metal-dependent reduction by NADPH to yield (R)-2,3-dihydroxy-isovalerate. The sequence is that of Ketol-acid reductoisomerase (NADP(+)) from Campylobacter hominis (strain ATCC BAA-381 / DSM 21671 / CCUG 45161 / LMG 19568 / NCTC 13146 / CH001A).